Reading from the N-terminus, the 159-residue chain is Large ribosomal subunit protein uL10 (159 aa).

The protein belongs to the universal ribosomal protein uL10 family. In terms of assembly, part of the ribosomal stalk of the 50S ribosomal subunit. The N-terminus interacts with L11 and the large rRNA to form the base of the stalk. The C-terminus forms an elongated spine to which L12 dimers bind in a sequential fashion forming a multimeric L10(L12)X complex.

Its function is as follows. Forms part of the ribosomal stalk, playing a central role in the interaction of the ribosome with GTP-bound translation factors. This is Large ribosomal subunit protein uL10 from Campylobacter jejuni (strain RM1221).